The sequence spans 421 residues: D-amino acid dehydrogenase (421 aa).

3-17 (VIVLGSGVIGVASAY) lines the FAD pocket.

Belongs to the DadA oxidoreductase family. The cofactor is FAD.

The enzyme catalyses a D-alpha-amino acid + A + H2O = a 2-oxocarboxylate + AH2 + NH4(+). The protein operates within amino-acid degradation; D-alanine degradation; NH(3) and pyruvate from D-alanine: step 1/1. In terms of biological role, oxidative deamination of D-amino acids. This Acinetobacter baumannii (strain SDF) protein is D-amino acid dehydrogenase.